Reading from the N-terminus, the 486-residue chain is Ribosome biogenesis protein YTM1 (486 aa).

The ubiquitin-like (UBL) domain stretch occupies residues Arg-12–Arg-99. 5 WD repeats span residues Gly-212–His-251, Gly-305–Leu-345, Pro-349–Ser-388, Pro-392–Phe-432, and Val-454–Glu-486. Residues Thr-249–Pro-299 form a disordered region.

The protein belongs to the WD repeat WDR12/YTM1 family. As to quaternary structure, component of the NOP7 complex, composed of ERB1, NOP7 and YTM1. The complex is held together by ERB1, which interacts with NOP7 via its N-terminal domain and with YTM1 via a high-affinity interaction between the seven-bladed beta-propeller domains of the 2 proteins. The NOP7 complex associates with the 66S pre-ribosome. Interacts (via UBL domain) with MDN1 (via VWFA/MIDAS domain).

The protein resides in the nucleus. Its subcellular location is the nucleolus. The protein localises to the nucleoplasm. Its function is as follows. Component of the NOP7 complex, which is required for maturation of the 25S and 5.8S ribosomal RNAs and formation of the 60S ribosome. This is Ribosome biogenesis protein YTM1 from Cryptococcus neoformans var. neoformans serotype D (strain B-3501A) (Filobasidiella neoformans).